A 428-amino-acid chain; its full sequence is C4-dicarboxylate transport protein (428 aa).

The next 9 membrane-spanning stretches (helical) occupy residues 4-24 (SLFKSLYFQVLTAIAIGILLG), 44-64 (LIKMVIAPVIFCTVVTGIAGM), 76-96 (VALLYFEIVSTIALIIGLIIV), 142-162 (IGAFASGNILQVLLFAVMFGF), 184-204 (VIFGIINMIMRLAPIGAFGAM), 222-242 (LIVCFYITCILFVVVVLGSIA), 289-309 (VVGLVIPTGYSFNLDGTSIYL), 326-346 (IFHQVTLLVVLLLSSKGAAGV), and 352-372 (IVLAATISAVGHLPVAGLALI).

Belongs to the dicarboxylate/amino acid:cation symporter (DAACS) (TC 2.A.23) family.

The protein localises to the cell inner membrane. Functionally, responsible for the transport of dicarboxylates such as succinate, fumarate, and malate from the periplasm across the membrane. The chain is C4-dicarboxylate transport protein from Citrobacter koseri (strain ATCC BAA-895 / CDC 4225-83 / SGSC4696).